A 314-amino-acid chain; its full sequence is MNAIWIDEQLETSARVQNSMKIEREDHKLEKRLCREVGRAIVDFNMIEEGDKVMVCVSGGKDSYAMLDILLKLQKRAPINFELVAVNLDQKQPGFPEHVLPEYLSKLGVPYHIENQDTYSIVTRVIPEGKTLCSLCSRLRRGILYRVAGELGCTKIALGHHRDDMLQTFFLNMFFAAKLKGMPPKLVSDDGKNIVIRPMAYVTEKDLTRWAQVQDFPIIPCTLCGSQENLQRKQVGNMLRDWQKQYPGRIENMFSALQNIVPSHLMDSKRHDFKGIRTTGVADPEGDKAFDAEEFMQAAPAGRAVIGINPLAPG.

A PP-loop motif motif is present at residues 58–63 (SGGKDS). Residues Cys133, Cys136, and Cys224 each contribute to the [4Fe-4S] cluster site.

This sequence belongs to the TtcA family. In terms of assembly, homodimer. The cofactor is Mg(2+). It depends on [4Fe-4S] cluster as a cofactor.

Its subcellular location is the cytoplasm. It catalyses the reaction cytidine(32) in tRNA + S-sulfanyl-L-cysteinyl-[cysteine desulfurase] + AH2 + ATP = 2-thiocytidine(32) in tRNA + L-cysteinyl-[cysteine desulfurase] + A + AMP + diphosphate + H(+). The protein operates within tRNA modification. Functionally, catalyzes the ATP-dependent 2-thiolation of cytidine in position 32 of tRNA, to form 2-thiocytidine (s(2)C32). The sulfur atoms are provided by the cysteine/cysteine desulfurase (IscS) system. This Polaromonas naphthalenivorans (strain CJ2) protein is tRNA-cytidine(32) 2-sulfurtransferase.